A 470-amino-acid polypeptide reads, in one-letter code: SHUGOSHIN 2 (470 aa).

The stretch at 72 to 113 (IQKLRINLRSVQEKNLQLAQANSQMLAELNTNRDRLKDLQHE) forms a coiled coil. 2 stretches are compositionally biased toward basic and acidic residues: residues 131–143 (VLPR…KDKV) and 150–162 (GDCK…DIKH). Disordered regions lie at residues 131–176 (VLPR…IKSS) and 358–470 (ESAG…RRKC). The span at 163 to 172 (KDTKRKRTTR) shows a compositional bias: basic residues. Basic and acidic residues predominate over residues 370–381 (SESRHETKEITR). Basic residues predominate over residues 382 to 392 (KRSFSTRRQST). Composition is skewed to basic and acidic residues over residues 396 to 406 (SQTDEAIKEIA), 423 to 438 (TESK…EGMT), and 449 to 462 (HAAE…EVSL).

Belongs to the shugoshin family.

Its function is as follows. Dispensable for both meiotic and mitotic cell cycle progression. Required with SGO1 for full protection of centromeric cohesion during anaphase I. Required to prevent precocious release of pericentromeric cohesins during meiosis. Acts redundantly to SGO1. In Arabidopsis thaliana (Mouse-ear cress), this protein is SHUGOSHIN 2.